The primary structure comprises 1085 residues: DNA polymerase (1085 aa).

The tract at residues 1059–1085 is disordered; the sequence is YDQKRPNPRPQEPLLENPFWDDSSQTA.

The protein belongs to the DNA polymerase type-B family. In terms of assembly, heterodimer with the terminal protein; this heterodimer binds to bp 9 to 18 of the genome. Forms a complex with viral pTP, DBP and hosts NFIA and POU2F1/OCT1 for initiation of replication.

Its subcellular location is the host nucleus. It carries out the reaction DNA(n) + a 2'-deoxyribonucleoside 5'-triphosphate = DNA(n+1) + diphosphate. Its function is as follows. Eukaryotic-type DNA polymerase involved in viral genomic replication. DNA synthesis is protein primed, and acts in a strand displacement replication. Functionally, eukaryotic-type DNA polymerase involved in viral genomic replication. DNA synthesis is protein primed, and acts in a strand displacement replication. Assembles in complex with viral pTP, DBP, host NFIA and host POU2F1/OCT1 on viral origin of replication. The polymerase covalently transfers dCMP onto pTP, thereby initiating complementary strand synthesis. The polypeptide is DNA polymerase (Pantherophis guttatus (Corn snake)).